Here is a 698-residue protein sequence, read N- to C-terminus: PWWP domain-containing DNA repair factor 3A (698 aa).

Disordered regions lie at residues 102 to 145 and 159 to 386; these read TSLS…EDDQ and CSPK…EEPP. Position 105 is a phosphoserine (Ser105). Residues 129–139 show a composition bias toward polar residues; it reads SQVSSAPSPSF. Phosphoserine is present on residues Ser165, Ser168, and Ser170. Polar residues predominate over residues 200 to 211; it reads DESQNGSGSQLD. Basic and acidic residues-rich tracts occupy residues 212–235 and 341–350; these read HGQESTTKKRQRNSGEKPARRGKA and RAGDSDRPEE. A phosphoserine mark is found at Ser355 and Ser356. Residues 370–384 show a composition bias toward acidic residues; it reads EEEEEEEEEEEEEEE. In terms of domain architecture, PWWP spans 399-460; that stretch reads VGMLVWLKYQ…KHFDCKEKHA (62 aa).

It belongs to the PWWP3A family. As to quaternary structure, interacts with TP53BP1 (via BRCT domain); the interaction is not dependent on its phosphorylation status. Binds nucleosomes. Interacts with trimethylated 'Lys-36' of histone H3 (H3K36me3) (in vitro).

It is found in the nucleus. Its function is as follows. Involved in the DNA damage response pathway by contributing to the maintenance of chromatin architecture. Recruited to the vicinity of DNA breaks by TP53BP1 and plays an accessory role to facilitate damage-induced chromatin changes and promoting chromatin relaxation. Required for efficient DNA repair and cell survival following DNA damage. This Rattus norvegicus (Rat) protein is PWWP domain-containing DNA repair factor 3A.